Consider the following 1511-residue polypeptide: DNA-directed RNA polymerase subunit beta' (1511 aa).

Residues Cys75, Cys77, Cys90, and Cys93 each coordinate Zn(2+). Positions 474, 476, and 478 each coordinate Mg(2+). Zn(2+) is bound by residues Cys804, Cys878, Cys885, and Cys888.

It belongs to the RNA polymerase beta' chain family. The RNAP catalytic core consists of 2 alpha, 1 beta, 1 beta' and 1 omega subunit. When a sigma factor is associated with the core the holoenzyme is formed, which can initiate transcription. The cofactor is Mg(2+). Requires Zn(2+) as cofactor.

It carries out the reaction RNA(n) + a ribonucleoside 5'-triphosphate = RNA(n+1) + diphosphate. DNA-dependent RNA polymerase catalyzes the transcription of DNA into RNA using the four ribonucleoside triphosphates as substrates. The chain is DNA-directed RNA polymerase subunit beta' from Aliarcobacter butzleri (strain RM4018) (Arcobacter butzleri).